Consider the following 373-residue polypeptide: Galactoside alpha-(1,2)-fucosyltransferase 1 (373 aa).

Topologically, residues Met-1–Ala-12 are cytoplasmic. A helical; Signal-anchor for type II membrane protein membrane pass occupies residues Phe-13–His-29. Over Gln-30 to Gly-373 the chain is Lumenal. 3 N-linked (GlcNAc...) asparagine glycosylation sites follow: Asn-66, Asn-301, and Asn-327.

Belongs to the glycosyltransferase 11 family. Brain.

It is found in the golgi apparatus. The protein resides in the golgi stack membrane. The catalysed reaction is a beta-D-galactosyl-(1-&gt;4)-N-acetyl-beta-D-glucosaminyl derivative + GDP-beta-L-fucose = an alpha-L-Fuc-(1-&gt;2)-beta-D-Gal-(1-&gt;4)-beta-D-GlcNAc derivative + GDP + H(+). The enzyme catalyses a ganglioside GA1 + GDP-beta-L-fucose = a ganglioside Fuc-GA1 + GDP + H(+). It catalyses the reaction a beta-D-Gal-(1-&gt;3)-beta-D-GlcNAc-(1-&gt;3)-beta-D-Gal-(1-&gt;4)-beta-D-Glc-(1&lt;-&gt;1')-Cer(d18:1(4E)) + GDP-beta-L-fucose = alpha-L-fucosyl-(1-&gt;2)- beta-D-galactosyl-(1-&gt;3)-N-acetyl-beta-D-glucosaminyl-(1-&gt;3)-beta-D-galactosyl-(1-&gt;4)-beta-D-glucosyl-(1&lt;-&gt;1')-N-acylsphing-4-enine + GDP + H(+). It carries out the reaction a neolactoside nLc4Cer(d18:1(4E)) + GDP-beta-L-fucose = a neolactoside IV(2)-alpha-Fuc-nLc4Cer(d18:1(4E)) + GDP + H(+). The catalysed reaction is a ganglioside GM1 + GDP-beta-L-fucose = a ganglioside Fuc-GM1 + GDP + H(+). The enzyme catalyses beta-D-galactosyl-(1-&gt;3)-N-acetyl-D-galactosamine + GDP-beta-L-fucose = alpha-L-fucosyl-(1-&gt;2)-beta-D-galactosyl-(1-&gt;3)-N-acetyl-D-galactosamine + GDP + H(+). It functions in the pathway protein modification; protein glycosylation. In terms of biological role, catalyzes the transfer of L-fucose, from a guanosine diphosphate-beta-L-fucose, to the terminal galactose residue of glycoconjugates through an alpha(1,2) linkage leading to H antigen synthesis that is an intermediate substrate in the synthesis of ABO blood group antigens. H antigen is essential for maturation of the glomerular layer of the main olfactory bulb, in cell migration and early cell-cell contacts during tumor associated angiogenesis. Preferentially fucosylates soluble lactose and to a lesser extent fucosylates glycolipids gangliosides GA1 and GM1a. This is Galactoside alpha-(1,2)-fucosyltransferase 1 from Oryctolagus cuniculus (Rabbit).